The chain runs to 130 residues: Small ribosomal subunit protein uS17m (130 aa).

The transit peptide at Met-1–Thr-20 directs the protein to the mitochondrion.

This sequence belongs to the universal ribosomal protein uS17 family. In terms of assembly, component of the mitochondrial small ribosomal subunit (mt-SSU). Mature mammalian 55S mitochondrial ribosomes consist of a small (28S) and a large (39S) subunit. The 28S small subunit contains a 12S ribosomal RNA (12S mt-rRNA) and 30 different proteins. The 39S large subunit contains a 16S rRNA (16S mt-rRNA), a copy of mitochondrial valine transfer RNA (mt-tRNA(Val)), which plays an integral structural role, and 52 different proteins.

The protein localises to the mitochondrion. In Homo sapiens (Human), this protein is Small ribosomal subunit protein uS17m (MRPS17).